The primary structure comprises 321 residues: Glutamyl-Q tRNA(Asp) synthetase (321 aa).

Residues 25-29 (RFAPS) and E61 contribute to the L-glutamate site. A 'HIGH' region motif is present at residues 28–38 (PSPSGDLHFGS). Zn(2+) contacts are provided by C117, C119, Y131, and C135. L-glutamate contacts are provided by Y188 and R206. The short motif at 244–248 (KLSKQ) is the 'KMSKS' region element. K247 is a binding site for ATP.

It belongs to the class-I aminoacyl-tRNA synthetase family. GluQ subfamily. Requires Zn(2+) as cofactor.

In terms of biological role, catalyzes the tRNA-independent activation of glutamate in presence of ATP and the subsequent transfer of glutamate onto a tRNA(Asp). Glutamate is transferred on the 2-amino-5-(4,5-dihydroxy-2-cyclopenten-1-yl) moiety of the queuosine in the wobble position of the QUC anticodon. This is Glutamyl-Q tRNA(Asp) synthetase from Yersinia pestis.